We begin with the raw amino-acid sequence, 461 residues long: Bifunctional protein GlmU (461 aa).

The interval 1–232 is pyrophosphorylase; that stretch reads MNLQIIILAA…SFEVQGINNR (232 aa). UDP-N-acetyl-alpha-D-glucosamine is bound by residues 8-11, Lys22, Gln73, and 78-79; these read LAAG and GT. Asp102 is a binding site for Mg(2+). 3 residues coordinate UDP-N-acetyl-alpha-D-glucosamine: Gly142, Glu157, and Asn230. Asn230 provides a ligand contact to Mg(2+). Residues 233 to 253 form a linker region; sequence QQLQQLERIWQQRAANQLMEK. Positions 254–461 are N-acetyltransferase; it reads GATLADANRF…WKRPVKRERD (208 aa). UDP-N-acetyl-alpha-D-glucosamine-binding residues include Arg336 and Lys354. The active-site Proton acceptor is His366. UDP-N-acetyl-alpha-D-glucosamine contacts are provided by Tyr369 and Asn380. Acetyl-CoA contacts are provided by residues Ala383, 389 to 390, Ser408, and Ala426; that span reads NY.

It in the N-terminal section; belongs to the N-acetylglucosamine-1-phosphate uridyltransferase family. This sequence in the C-terminal section; belongs to the transferase hexapeptide repeat family. As to quaternary structure, homotrimer. Mg(2+) serves as cofactor.

The protein localises to the cytoplasm. It catalyses the reaction alpha-D-glucosamine 1-phosphate + acetyl-CoA = N-acetyl-alpha-D-glucosamine 1-phosphate + CoA + H(+). It carries out the reaction N-acetyl-alpha-D-glucosamine 1-phosphate + UTP + H(+) = UDP-N-acetyl-alpha-D-glucosamine + diphosphate. It functions in the pathway nucleotide-sugar biosynthesis; UDP-N-acetyl-alpha-D-glucosamine biosynthesis; N-acetyl-alpha-D-glucosamine 1-phosphate from alpha-D-glucosamine 6-phosphate (route II): step 2/2. The protein operates within nucleotide-sugar biosynthesis; UDP-N-acetyl-alpha-D-glucosamine biosynthesis; UDP-N-acetyl-alpha-D-glucosamine from N-acetyl-alpha-D-glucosamine 1-phosphate: step 1/1. It participates in bacterial outer membrane biogenesis; LPS lipid A biosynthesis. Functionally, catalyzes the last two sequential reactions in the de novo biosynthetic pathway for UDP-N-acetylglucosamine (UDP-GlcNAc). The C-terminal domain catalyzes the transfer of acetyl group from acetyl coenzyme A to glucosamine-1-phosphate (GlcN-1-P) to produce N-acetylglucosamine-1-phosphate (GlcNAc-1-P), which is converted into UDP-GlcNAc by the transfer of uridine 5-monophosphate (from uridine 5-triphosphate), a reaction catalyzed by the N-terminal domain. This Legionella pneumophila (strain Corby) protein is Bifunctional protein GlmU.